A 380-amino-acid polypeptide reads, in one-letter code: Carbamoyl phosphate synthase small chain (380 aa).

Residues 1-187 (MTTSTRGAAK…VVPAIGAKRF (187 aa)) are CPSase. Residues Ser-55, Gly-236, and Gly-238 each contribute to the L-glutamine site. The region spanning 188-380 (TVAAVDLGIK…FVSLMEGQRA (193 aa)) is the Glutamine amidotransferase type-1 domain. Cys-264 functions as the Nucleophile in the catalytic mechanism. L-glutamine is bound by residues Phe-265, Gln-268, Asn-306, Gly-308, and Phe-309. Catalysis depends on residues His-354 and Glu-356.

It belongs to the CarA family. In terms of assembly, composed of two chains; the small (or glutamine) chain promotes the hydrolysis of glutamine to ammonia, which is used by the large (or ammonia) chain to synthesize carbamoyl phosphate. Tetramer of heterodimers (alpha,beta)4.

It catalyses the reaction hydrogencarbonate + L-glutamine + 2 ATP + H2O = carbamoyl phosphate + L-glutamate + 2 ADP + phosphate + 2 H(+). The enzyme catalyses L-glutamine + H2O = L-glutamate + NH4(+). Its pathway is amino-acid biosynthesis; L-arginine biosynthesis; carbamoyl phosphate from bicarbonate: step 1/1. The protein operates within pyrimidine metabolism; UMP biosynthesis via de novo pathway; (S)-dihydroorotate from bicarbonate: step 1/3. Small subunit of the glutamine-dependent carbamoyl phosphate synthetase (CPSase). CPSase catalyzes the formation of carbamoyl phosphate from the ammonia moiety of glutamine, carbonate, and phosphate donated by ATP, constituting the first step of 2 biosynthetic pathways, one leading to arginine and/or urea and the other to pyrimidine nucleotides. The small subunit (glutamine amidotransferase) binds and cleaves glutamine to supply the large subunit with the substrate ammonia. The polypeptide is Carbamoyl phosphate synthase small chain (Streptomyces avermitilis (strain ATCC 31267 / DSM 46492 / JCM 5070 / NBRC 14893 / NCIMB 12804 / NRRL 8165 / MA-4680)).